Reading from the N-terminus, the 404-residue chain is Probable tRNA sulfurtransferase (404 aa).

The region spanning 60-165 is the THUMP domain; it reads QPVVEALKLV…DEAAYISYEE (106 aa). ATP-binding positions include 183–184, 208–209, R265, G287, and Q296; these read ML and HF.

It belongs to the ThiI family.

It is found in the cytoplasm. It carries out the reaction [ThiI sulfur-carrier protein]-S-sulfanyl-L-cysteine + a uridine in tRNA + 2 reduced [2Fe-2S]-[ferredoxin] + ATP + H(+) = [ThiI sulfur-carrier protein]-L-cysteine + a 4-thiouridine in tRNA + 2 oxidized [2Fe-2S]-[ferredoxin] + AMP + diphosphate. It catalyses the reaction [ThiS sulfur-carrier protein]-C-terminal Gly-Gly-AMP + S-sulfanyl-L-cysteinyl-[cysteine desulfurase] + AH2 = [ThiS sulfur-carrier protein]-C-terminal-Gly-aminoethanethioate + L-cysteinyl-[cysteine desulfurase] + A + AMP + 2 H(+). Its pathway is cofactor biosynthesis; thiamine diphosphate biosynthesis. In terms of biological role, catalyzes the ATP-dependent transfer of a sulfur to tRNA to produce 4-thiouridine in position 8 of tRNAs, which functions as a near-UV photosensor. Also catalyzes the transfer of sulfur to the sulfur carrier protein ThiS, forming ThiS-thiocarboxylate. This is a step in the synthesis of thiazole, in the thiamine biosynthesis pathway. The sulfur is donated as persulfide by IscS. The polypeptide is Probable tRNA sulfurtransferase (Streptococcus pyogenes serotype M6 (strain ATCC BAA-946 / MGAS10394)).